We begin with the raw amino-acid sequence, 411 residues long: LIM domain-binding protein 1 (411 aa).

Disordered regions lie at residues 284-330 (PPAE…TFAL) and 367-411 (DAAN…QASQ). The span at 302–318 (SGGSTMSSGGGNTNNSN) shows a compositional bias: low complexity. Residues 336–375 (DVMVVGEPTLMGGEFGDEDERLITRLENTQFDAANGIDDE) form the LIM interaction domain (LID) domain.

This sequence belongs to the LDB family. In terms of assembly, forms homodimers and heterodimers. As to expression, first expressed at stages 15-16 in presumptive limb mesoderm. As limb outgrowth proceeds, expressed in the entire limb bud, concentrating in the distal mesoderm throughout limb development. Both hindlimbs and forelimbs exhibit similar expression patterns.

The protein localises to the nucleus. Binds to the LIM domain of a wide variety of LIM domain-containing transcription factors. In Gallus gallus (Chicken), this protein is LIM domain-binding protein 1.